Reading from the N-terminus, the 234-residue chain is 2-amino-5-formylamino-6-ribosylaminopyrimidin-4(3H)-one 5'-monophosphate deformylase (234 aa).

Glutamate 29, histidine 31, aspartate 40, and histidine 109 together coordinate Fe cation.

The protein belongs to the creatininase superfamily. FAPy deformylase family. Homodimer. It depends on Fe(2+) as a cofactor. Zn(2+) serves as cofactor.

It carries out the reaction 2-amino-5-formylamino-6-(5-phospho-D-ribosylamino)pyrimidin-4(3H)-one + H2O = 2,5-diamino-6-(1-D-ribosylamino)pyrimidin-4(3H)-one 5'-phosphate + formate + H(+). The protein operates within cofactor biosynthesis; coenzyme F420 biosynthesis. It participates in cofactor biosynthesis; riboflavin biosynthesis. In terms of biological role, catalyzes the hydrolysis of the formamide of 2-amino-5-formylamino-6-ribosylamino-4(3H)-pyrimidinone 5'-monophosphate (FAPy) to form 2,5-diamino-6-ribosylamino-4(3H)-pyrimidinone 5'-phosphate (APy). The chain is 2-amino-5-formylamino-6-ribosylaminopyrimidin-4(3H)-one 5'-monophosphate deformylase from Methanobrevibacter ruminantium (strain ATCC 35063 / DSM 1093 / JCM 13430 / OCM 146 / M1) (Methanobacterium ruminantium).